The sequence spans 400 residues: Protein screw (400 aa).

An N-terminal signal peptide occupies residues 1–16 (MLNVFFLTSLFYAASA). A propeptide spanning residues 17 to 277 (TTYVTTNNHI…RFKRDLEKRR (261 aa)) is cleaved from the precursor. N-linked (GlcNAc...) asparagine glycans are attached at residues Asn165, Asn189, Asn201, Asn304, and Asn342. 3 disulfides stabilise this stretch: Cys300/Cys365, Cys329/Cys397, and Cys333/Cys399.

Belongs to the TGF-beta family. In terms of assembly, heterodimers of scw/dpp are the active subunit, dpp/dpp homodimers elicit a basal response and scw/scw homodimers alone are ineffective in specifying a dorsal pattern. In terms of tissue distribution, ubiquitously expressed during early stages of embryogenesis, but the effect on development appears graded and is restricted to the dorsal side of the embryo.

The protein resides in the secreted. Part of the signal that specifies dorsal cell fates in the embryo. Acts together with dpp. The polypeptide is Protein screw (scw) (Drosophila melanogaster (Fruit fly)).